Consider the following 188-residue polypeptide: UPF0200 protein M164_1169 (188 aa).

ATP is bound at residue glycine 15 to serine 22.

Belongs to the UPF0200 family.

The chain is UPF0200 protein M164_1169 from Saccharolobus islandicus (strain M.16.4 / Kamchatka #3) (Sulfolobus islandicus).